Here is a 386-residue protein sequence, read N- to C-terminus: Putative nickel insertion protein (386 aa).

The protein belongs to the LarC family.

This Dictyoglomus thermophilum (strain ATCC 35947 / DSM 3960 / H-6-12) protein is Putative nickel insertion protein.